The primary structure comprises 322 residues: MTASPSKLAQLRELSVVVADTGDYDAIKRLQPVDCTTNPTLVKKALDLPVYADLLERELTWGRAHGGDDRTTTVDEVADRLTIGVGVKLSALVPGRVSTEVDADLAHDTQATIAKARKFVAMYAERGVPKDKILIKIAATWEGIEAARQLQLEGIDCNLTLIFNRAQALACAEANVFLISPFVGRILDYYVAQGQTPASIDEDPGVVFVRTVYNAFKQRGSSTVVMGASFRSTAQIEALAGCDRLTISPDLLEKLDAEHGELPRKLSPGNANNAQITPIDSDSFASGLAADPMATEKLASGIDTFAKDLHALRKTIADKLAG.

Catalysis depends on Lys-136, which acts as the Schiff-base intermediate with substrate.

Belongs to the transaldolase family. Type 1 subfamily. Homodimer.

The protein localises to the cytoplasm. It catalyses the reaction D-sedoheptulose 7-phosphate + D-glyceraldehyde 3-phosphate = D-erythrose 4-phosphate + beta-D-fructose 6-phosphate. The protein operates within carbohydrate degradation; pentose phosphate pathway; D-glyceraldehyde 3-phosphate and beta-D-fructose 6-phosphate from D-ribose 5-phosphate and D-xylulose 5-phosphate (non-oxidative stage): step 2/3. Transaldolase is important for the balance of metabolites in the pentose-phosphate pathway. The polypeptide is Transaldolase (Xanthomonas oryzae pv. oryzae (strain KACC10331 / KXO85)).